Consider the following 400-residue polypeptide: CCA-adding enzyme (400 aa).

Residues G28 and R31 each contribute to the ATP site. G28 and R31 together coordinate CTP. Residues D41 and D43 each contribute to the Mg(2+) site. Residues R112, D155, R158, R161, and R164 each coordinate ATP. Positions 112, 155, 158, 161, and 164 each coordinate CTP.

It belongs to the tRNA nucleotidyltransferase/poly(A) polymerase family. Bacterial CCA-adding enzyme type 3 subfamily. In terms of assembly, homodimer. Requires Mg(2+) as cofactor.

The enzyme catalyses a tRNA precursor + 2 CTP + ATP = a tRNA with a 3' CCA end + 3 diphosphate. The catalysed reaction is a tRNA with a 3' CCA end + 2 CTP + ATP = a tRNA with a 3' CCACCA end + 3 diphosphate. Catalyzes the addition and repair of the essential 3'-terminal CCA sequence in tRNAs without using a nucleic acid template. Adds these three nucleotides in the order of C, C, and A to the tRNA nucleotide-73, using CTP and ATP as substrates and producing inorganic pyrophosphate. tRNA 3'-terminal CCA addition is required both for tRNA processing and repair. Also involved in tRNA surveillance by mediating tandem CCA addition to generate a CCACCA at the 3' terminus of unstable tRNAs. While stable tRNAs receive only 3'-terminal CCA, unstable tRNAs are marked with CCACCA and rapidly degraded. The polypeptide is CCA-adding enzyme (Staphylococcus aureus (strain MRSA252)).